Here is a 39-residue protein sequence, read N- to C-terminus: Contryphan-Cal3 (39 aa).

The signal sequence occupies residues 1–20 (MTRTAVLLLTLLFLVAMAAS). Cys29 and Cys35 form a disulfide bridge.

As to expression, expressed by the venom duct.

The protein resides in the secreted. Probable neurotoxin. This chain is Contryphan-Cal3, found in Californiconus californicus (California cone).